Here is a 542-residue protein sequence, read N- to C-terminus: uncharacterized protein (542 aa).

A run of 12 helical transmembrane segments spans residues 12–32 (LVFG…GTVL), 57–77 (FGDV…AILY), 94–114 (VIVM…SWTA), 123–143 (AAAV…AGLA), 168–188 (LFAV…AALV), 191–211 (FVVS…LVTL), 216–236 (IDAP…AFLL), 243–263 (SGVV…PTVI), 277–297 (IATF…IPGA), 313–333 (VLAL…VQAT), 358–378 (VTSW…AVPM), and 391–411 (LIIF…GTSL).

It belongs to the monovalent cation:proton antiporter 1 (CPA1) transporter (TC 2.A.36) family.

Its subcellular location is the cell membrane. This is an uncharacterized protein from Mycobacterium bovis (strain ATCC BAA-935 / AF2122/97).